A 397-amino-acid polypeptide reads, in one-letter code: Enoyl-[acyl-carrier-protein] reductase [NADH] (397 aa).

NAD(+)-binding positions include glycine 48–tyrosine 53, phenylalanine 74–glutamate 75, aspartate 111–alanine 112, and valine 139–alanine 140. Tyrosine 225 is a binding site for substrate. Catalysis depends on tyrosine 235, which acts as the Proton donor. Residues lysine 244 and valine 273–threonine 275 contribute to the NAD(+) site.

It belongs to the TER reductase family. As to quaternary structure, monomer.

The catalysed reaction is a 2,3-saturated acyl-[ACP] + NAD(+) = a (2E)-enoyl-[ACP] + NADH + H(+). It functions in the pathway lipid metabolism; fatty acid biosynthesis. In terms of biological role, involved in the final reduction of the elongation cycle of fatty acid synthesis (FAS II). Catalyzes the reduction of a carbon-carbon double bond in an enoyl moiety that is covalently linked to an acyl carrier protein (ACP). The protein is Enoyl-[acyl-carrier-protein] reductase [NADH] of Burkholderia pseudomallei (strain 668).